The following is a 626-amino-acid chain: tRNA uridine 5-carboxymethylaminomethyl modification enzyme MnmG (626 aa).

FAD is bound at residue 13 to 18 (GGGHAG). Residue 273–287 (GPRYCPSIEDKIHRF) coordinates NAD(+).

Belongs to the MnmG family. As to quaternary structure, homodimer. Heterotetramer of two MnmE and two MnmG subunits. It depends on FAD as a cofactor.

The protein resides in the cytoplasm. Functionally, NAD-binding protein involved in the addition of a carboxymethylaminomethyl (cmnm) group at the wobble position (U34) of certain tRNAs, forming tRNA-cmnm(5)s(2)U34. This Acinetobacter baumannii (strain ATCC 17978 / DSM 105126 / CIP 53.77 / LMG 1025 / NCDC KC755 / 5377) protein is tRNA uridine 5-carboxymethylaminomethyl modification enzyme MnmG.